The following is a 156-amino-acid chain: Small ribosomal subunit protein uS7 (156 aa).

It belongs to the universal ribosomal protein uS7 family. In terms of assembly, part of the 30S ribosomal subunit. Contacts proteins S9 and S11.

In terms of biological role, one of the primary rRNA binding proteins, it binds directly to 16S rRNA where it nucleates assembly of the head domain of the 30S subunit. Is located at the subunit interface close to the decoding center, probably blocks exit of the E-site tRNA. The protein is Small ribosomal subunit protein uS7 of Haemophilus influenzae (strain 86-028NP).